Here is a 215-residue protein sequence, read N- to C-terminus: HTH-type transcriptional repressor FabR (215 aa).

An HTH tetR-type domain is found at 10–70 (KTRRSLVEAA…TMVDESGLML (61 aa)). The segment at residues 33–52 (SLREVAREAGIAPTSFYRHF) is a DNA-binding region (H-T-H motif).

In terms of assembly, homodimer.

Its subcellular location is the cytoplasm. Its function is as follows. Represses the transcription of fabB, involved in unsaturated fatty acid (UFA) biosynthesis. By controlling UFA production, FabR directly influences the physical properties of the membrane bilayer. This is HTH-type transcriptional repressor FabR from Shigella boydii serotype 18 (strain CDC 3083-94 / BS512).